We begin with the raw amino-acid sequence, 234 residues long: Phosphoribosylaminoimidazole-succinocarboxamide synthase (234 aa).

The protein belongs to the SAICAR synthetase family.

The enzyme catalyses 5-amino-1-(5-phospho-D-ribosyl)imidazole-4-carboxylate + L-aspartate + ATP = (2S)-2-[5-amino-1-(5-phospho-beta-D-ribosyl)imidazole-4-carboxamido]succinate + ADP + phosphate + 2 H(+). Its pathway is purine metabolism; IMP biosynthesis via de novo pathway; 5-amino-1-(5-phospho-D-ribosyl)imidazole-4-carboxamide from 5-amino-1-(5-phospho-D-ribosyl)imidazole-4-carboxylate: step 1/2. The chain is Phosphoribosylaminoimidazole-succinocarboxamide synthase from Streptococcus agalactiae serotype V (strain ATCC BAA-611 / 2603 V/R).